We begin with the raw amino-acid sequence, 537 residues long: uncharacterized protein (537 aa).

4 disordered regions span residues 1–33 (MEPG…ILAF), 71–98 (SSPP…RKRQ), 197–220 (SHNN…SEEK), and 516–537 (GRQR…EEQN). Ser-72 is subject to Phosphoserine. The segment covering 88–98 (SRVDSEARKRQ) has biased composition (basic and acidic residues). Polar residues predominate over residues 197-214 (SHNNMASSNTQSNTQLSE). Basic residues predominate over residues 516–529 (GRQRSSRYKSHVHK).

This sequence belongs to the NAD kinase family.

This is an uncharacterized protein from Schizosaccharomyces pombe (strain 972 / ATCC 24843) (Fission yeast).